We begin with the raw amino-acid sequence, 365 residues long: Protein YIM1 (365 aa).

Belongs to the YIM1 family.

It is found in the lipid droplet. The protein localises to the mitochondrion. This Saccharomyces cerevisiae (strain ATCC 204508 / S288c) (Baker's yeast) protein is Protein YIM1 (YIM1).